We begin with the raw amino-acid sequence, 351 residues long: Protein RecA (351 aa).

73 to 80 (GPESSGKT) is a binding site for ATP.

It belongs to the RecA family.

The protein resides in the cytoplasm. Its function is as follows. Can catalyze the hydrolysis of ATP in the presence of single-stranded DNA, the ATP-dependent uptake of single-stranded DNA by duplex DNA, and the ATP-dependent hybridization of homologous single-stranded DNAs. It interacts with LexA causing its activation and leading to its autocatalytic cleavage. This Herbaspirillum seropedicae protein is Protein RecA.